We begin with the raw amino-acid sequence, 318 residues long: Bis(5'-nucleosyl)-tetraphosphatase, symmetrical (318 aa).

The interval 269–318 is disordered; the sequence is PGREVTGPAPVARAPRRPRERLGRQRSRGNRGNAGNTAVPAKPPVDTPQD. Positions 282–297 are enriched in basic residues; it reads APRRPRERLGRQRSRG. Over residues 309–318 the composition is skewed to pro residues; it reads AKPPVDTPQD.

Belongs to the Ap4A hydrolase family.

It carries out the reaction P(1),P(4)-bis(5'-adenosyl) tetraphosphate + H2O = 2 ADP + 2 H(+). In terms of biological role, hydrolyzes diadenosine 5',5'''-P1,P4-tetraphosphate to yield ADP. The protein is Bis(5'-nucleosyl)-tetraphosphatase, symmetrical of Xanthomonas oryzae pv. oryzae (strain MAFF 311018).